The following is a 457-amino-acid chain: Multidrug resistance protein MdtK (457 aa).

The next 12 helical transmembrane spans lie at 11–31, 53–73, 93–113, 127–147, 160–180, 191–211, 243–263, 276–296, 316–336, 357–377, 387–407, and 418–438; these read LLAL…MGFV, IWLP…PVVA, WLAG…GYII, AVGY…FQVA, GMVM…IFIY, VGCG…MLWW, LPIA…ALLV, IALN…AAVT, RTGV…TVLM, LMLL…GSGI, IFFI…YLLA, and PAGF…MMML.

It belongs to the multi antimicrobial extrusion (MATE) (TC 2.A.66.1) family. MdtK subfamily.

The protein resides in the cell inner membrane. Functionally, multidrug efflux pump that functions probably as a Na(+)/drug antiporter. This Klebsiella pneumoniae subsp. pneumoniae (strain ATCC 700721 / MGH 78578) protein is Multidrug resistance protein MdtK.